The sequence spans 318 residues: DNA-directed RNA polymerase subunit alpha 2 (318 aa).

Positions 1 to 227 (MALENLLHPT…NQLRNIVDIE (227 aa)) are alpha N-terminal domain (alpha-NTD). The segment at 242-318 (INPILLKHVE…TLIENWPQDL (77 aa)) is alpha C-terminal domain (alpha-CTD).

This sequence belongs to the RNA polymerase alpha chain family. As to quaternary structure, homodimer. The RNAP catalytic core consists of 2 alpha, 1 beta, 1 beta' and 1 omega subunit. When a sigma factor is associated with the core the holoenzyme is formed, which can initiate transcription.

The enzyme catalyses RNA(n) + a ribonucleoside 5'-triphosphate = RNA(n+1) + diphosphate. Its function is as follows. DNA-dependent RNA polymerase catalyzes the transcription of DNA into RNA using the four ribonucleoside triphosphates as substrates. The polypeptide is DNA-directed RNA polymerase subunit alpha 2 (Francisella tularensis subsp. novicida (strain U112)).